The sequence spans 1012 residues: AP-2 complex subunit alpha-1 (1012 aa).

HEAT repeat units follow at residues 254 to 289, 354 to 391, 393 to 430, and 525 to 565; these read AMRA…VVKN, DIIK…VSNA, DIVE…DLSW, and PTIP…CIDV. The segment at 652–678 is disordered; it reads STDPESVARSLSHPNGTLSNIDPQTPS. Residues 663–675 are compositionally biased toward polar residues; it reads SHPNGTLSNIDPQ. The GAE domain occupies 742 to 841; it reads ALCLKDSGVL…LDFSYKFGAN (100 aa).

Belongs to the adaptor complexes large subunit family. In terms of assembly, adaptor protein complex 2 (AP-2) is a heterotetramer composed of two large adaptins (alpha-type and beta-type subunits), a medium adaptin (mu-type subunit) and a small adaptin (sigma-type subunit). Binds to EPSIN2.

Its subcellular location is the membrane. The protein resides in the coated pit. Its function is as follows. Subunit of the adaptor protein complex 2 (AP-2). Adaptor protein complexes function in protein transport via transport vesicles in different membrane traffic pathways. Adaptor protein complexes are vesicle coat components and appear to be involved in cargo selection and vesicle formation. AP-2 is involved in clathrin-dependent endocytosis in which cargo proteins are incorporated into vesicles surrounded by clathrin (clathrin-coated vesicles, CCVs) which are destined for fusion with the early endosome. The complex binds polyphosphoinositides. The chain is AP-2 complex subunit alpha-1 (ALPHA-ADR) from Arabidopsis thaliana (Mouse-ear cress).